Consider the following 592-residue polypeptide: MEDPDIKRCKLSCVATVDDVIEQVMTYITDPKDRDSASLVCRRWFKIDSETREHVTMALCYTATPDRLSRRFPNLRSLKLKGKPRAAMFNLIPENWGGYVTPWVTEISNNLRQLKSVHFRRMIVSDLDLDRLAKARADDLETLKLDKCSGFTTDGLLSIVTHCRKIKTLLMEESSFSEKDGKWLHELAQHNTSLEVLNFYMTEFAKISPKDLETIARNCRSLVSVKVGDFEILELVGFFKAAANLEEFCGGSLNEDIGMPEKYMNLVFPRKLCRLGLSYMGPNEMPILFPFAAQIRKLDLLYALLETEDHCTLIQKCPNLEVLETRNVIGDRGLEVLAQYCKQLKRLRIERGADEQGMEDEEGLVSQRGLIALAQGCQELEYMAVYVSDITNESLESIGTYLKNLCDFRLVLLDREERITDLPLDNGVRSLLIGCKKLRRFAFYLRQGGLTDLGLSYIGQYSPNVRWMLLGYVGESDEGLMEFSRGCPNLQKLEMRGCCFSERAIAAAVTKLPSLRYLWVQGYRASMTGQDLMQMARPYWNIELIPSRRVPEVNQQGEIREMEHPAHILAYYSLAGQRTDCPTTVRVLKEPI.

Residues 16 to 57 form the F-box domain; sequence TVDDVIEQVMTYITDPKDRDSASLVCRRWFKIDSETREHVTM. LRR repeat units follow at residues 58-82, 83-102, 103-120, 121-154, 155-182, 183-210, 211-236, 237-264, 265-283, 284-308, 309-332, 333-368, 369-393, 394-426, 427-456, 457-478, 479-500, and 501-524; these read ALCY…KLKG, KPRA…YVTP, WVTE…VHFR, RMIV…FTTD, GLLS…KDGK, WLHE…ISPK, DLET…LELV, GFFK…EKYM, NLVF…MGPN, EMPI…LETE, DHCT…IGDR, GLEV…VSQR, GLIA…ITNE, SLES…PLDN, GVRS…LGLS, YIGQ…ESDE, GLME…GCCF, and SERA…QGYR. Arg85 contributes to the jasmonate binding site. Jasmonate is bound by residues Arg348, Tyr386, and Arg409. Arg496 provides a ligand contact to jasmonate.

Component of SCF(COI1) E3 ubiquitin ligase complexes at least composed of ASK1 or ASK2, CUL1, RBX1A or RBX1B and COI1. Interacts with ASK1 and ASK2, but separately. Also binds to ASK11 and ASK12. Interacts with RBCS-1B and HDA6. SCF complexes interact with the COP9 signalosome (CSN). Interacts with TIFY10A.

It functions in the pathway protein modification; protein ubiquitination. Required for jasmonate-regulated plant fertility and defense processes, and for coronatine and/or other elicitors perceptions/responses. Seems to not be required for meiosis. Required for the regulation of some genes induced by wounding, but not for all. Component of SCF(COI1) E3 ubiquitin ligase complexes, which may mediate the ubiquitination and subsequent proteasomal degradation of target proteins (probably including the ribulose bisphosphate carboxylase small chain 1B RBCS-1B and the histone deacetylase HDA6). These SCF complexes play crucial roles in regulating response to jasmonate, and their interactions with the COP9 signalosome (CSN) appear to be important for their activity. Interacts with TIFY10A and inositol pentakisphosphate to form a high-affinity jasmonates coreceptor. Involved in the regulation of plant gene expression during plant-pathogen interactions with Pseudomonas syringae and Alternaria brassicicola. The protein is Coronatine-insensitive protein 1 (COI1) of Arabidopsis thaliana (Mouse-ear cress).